We begin with the raw amino-acid sequence, 196 residues long: GTP cyclohydrolase-2 (196 aa).

49-53 (RIHSE) provides a ligand contact to GTP. The Zn(2+) site is built by C54, C65, and C67. Residues Q70, 92–94 (EGR), and T114 contribute to the GTP site. The active-site Proton acceptor is the D126. The active-site Nucleophile is R128. Residues T149 and K154 each contribute to the GTP site.

This sequence belongs to the GTP cyclohydrolase II family. In terms of assembly, homodimer. Zn(2+) serves as cofactor.

The enzyme catalyses GTP + 4 H2O = 2,5-diamino-6-hydroxy-4-(5-phosphoribosylamino)-pyrimidine + formate + 2 phosphate + 3 H(+). It participates in cofactor biosynthesis; riboflavin biosynthesis; 5-amino-6-(D-ribitylamino)uracil from GTP: step 1/4. Its function is as follows. Catalyzes the conversion of GTP to 2,5-diamino-6-ribosylamino-4(3H)-pyrimidinone 5'-phosphate (DARP), formate and pyrophosphate. This Buchnera aphidicola subsp. Schizaphis graminum (strain Sg) protein is GTP cyclohydrolase-2.